We begin with the raw amino-acid sequence, 155 residues long: MSEQNNTEMTFQIQRIYTKDISFEAPNAPHVFQKDWQPEVKLDLDTASSQLADDVYEVVLRVTVTASLGEETAFLCEVQQGGIFSIAGIEGTQMAHCLGAYCPNILFPYARECITSLVSRGTFPQLNLAPVNFDALFMNYLQQQAGEGTEEHQDA.

This sequence belongs to the SecB family. As to quaternary structure, homotetramer, a dimer of dimers. One homotetramer interacts with 1 SecA dimer.

The protein localises to the cytoplasm. In terms of biological role, one of the proteins required for the normal export of preproteins out of the cell cytoplasm. It is a molecular chaperone that binds to a subset of precursor proteins, maintaining them in a translocation-competent state. It also specifically binds to its receptor SecA. The polypeptide is Protein-export protein SecB (Escherichia fergusonii (strain ATCC 35469 / DSM 13698 / CCUG 18766 / IAM 14443 / JCM 21226 / LMG 7866 / NBRC 102419 / NCTC 12128 / CDC 0568-73)).